A 538-amino-acid polypeptide reads, in one-letter code: RNA-binding protein RO60 (538 aa).

M1 is modified (N-acetylmethionine). Residues S4 and S19 each carry the phosphoserine modification. A TROVE domain is found at 16 to 369 (IANSQDGYVW…TFKTVEPTGK (354 aa)). An RNA-binding region spans residues 120 to 284 (RIPTHLFTFI…EMPLTALLRN (165 aa)). N6-acetyllysine is present on residues K224 and K359. Residues 361–538 (FKTVEPTGKR…VIRNFTLDMI (178 aa)) are VWFA-like domain. 3 residues coordinate a divalent metal cation: S378, S380, and T445.

The protein belongs to the Ro 60 kDa family. As to quaternary structure, identified in a IGF2BP1-dependent mRNP granule complex containing untranslated mRNAs. Found in a complex with PUF60 and Y5 RNA. Interacts with RAB11FIP5.

It is found in the cytoplasm. Functionally, RNA-binding protein that binds to misfolded non-coding RNAs, pre-5S rRNA, and several small cytoplasmic RNA molecules known as Y RNAs. Binds to endogenous Alu retroelements which are induced by type I interferon and stimulate porinflammatory cytokine secretion. Regulates the expression of Alu retroelements as well as inflammatory genes. May play roles in cilia formation and/or maintenance. The sequence is that of RNA-binding protein RO60 from Homo sapiens (Human).